Consider the following 291-residue polypeptide: HTH-type transcriptional activator AmpR (291 aa).

In terms of domain architecture, HTH lysR-type spans 6-63 (IPLNSLRAFEAAARHLSFTRAAIELNVTHSAISQHVKSLEQQLNCQLFVRGSRGLMLT). The H-T-H motif DNA-binding region spans 23–42 (FTRAAIELNVTHSAISQHVK).

It belongs to the LysR transcriptional regulatory family.

Its subcellular location is the cytoplasm. In terms of biological role, regulates the expression of the beta-lactamase gene. Represses cephalosporinase (AmpC) in the presence of beta-lactams and induces it in the absence of them. The protein is HTH-type transcriptional activator AmpR (ampR) of Citrobacter freundii.